The sequence spans 255 residues: 5-oxoprolinase subunit A (255 aa).

The protein belongs to the LamB/PxpA family. In terms of assembly, forms a complex composed of PxpA, PxpB and PxpC.

The enzyme catalyses 5-oxo-L-proline + ATP + 2 H2O = L-glutamate + ADP + phosphate + H(+). Functionally, catalyzes the cleavage of 5-oxoproline to form L-glutamate coupled to the hydrolysis of ATP to ADP and inorganic phosphate. The protein is 5-oxoprolinase subunit A of Nitrobacter hamburgensis (strain DSM 10229 / NCIMB 13809 / X14).